The sequence spans 176 residues: MGFPKEGEKVQIHSYKHNGSIHRMWEETTILKGTQSLVIGANDRTVVTESDGRTWITREPAICYFHANYWFNVIGMLREDGVYYYCNLSSPFAYDSEALKYIDYDLDIKVYPDMTYTLLDEDEYEKHSQIMQYPPVIDTILKRNVAHLTQWIHQRKGPFAPDFVDMWYERYLMYRN.

R23 serves as the catalytic Proton donor. Residues N87, D103, D105, D107, D120, and E123 each contribute to the Mg(2+) site.

The protein belongs to the Ntdp family. The cofactor is Mg(2+).

The enzyme catalyses a ribonucleoside 5'-triphosphate + H2O = a ribonucleoside 5'-diphosphate + phosphate + H(+). It carries out the reaction a ribonucleoside 5'-diphosphate + H2O = a ribonucleoside 5'-phosphate + phosphate + H(+). In terms of biological role, has nucleoside phosphatase activity towards nucleoside triphosphates and nucleoside diphosphates. This is Nucleoside triphosphate/diphosphate phosphatase from Bacillus cereus (strain G9842).